The sequence spans 348 residues: MTGREILEKLERREFTREVLKEALSINDRGFNEALFKLADEIRRKYVGDEVHIRAIIEFSNVCRKNCLYCGLRRDNKNLKRYRMTPEEIVERARLAVQFGAKTIVLQSGEDPYYMPDVISDIVKEIKKMGVAVTLSLGEWPREYYEKWKEAGADRYLLRHETANPVLHRKLRPDTSFENRLNCLLTLKELGYETGAGSMVGLPGQTIDDLVDDLLFLKEHDFDMVGIGPFIPHPDTPLANEKKGDFTLTLKMVALTRILLPDSNIPATTAMGTIVPGGREITLRCGANVIMPNWTPSPYRQLYQLYPGKICVFEKDTACIPCVMKMIELLGRKPGRDWGGRKRVFETV.

The Radical SAM core domain maps to 49 to 268 (DEVHIRAIIE…LLPDSNIPAT (220 aa)). 3 residues coordinate [4Fe-4S] cluster: cysteine 63, cysteine 67, and cysteine 70. [2Fe-2S] cluster is bound by residues cysteine 311, cysteine 319, and cysteine 322.

This sequence belongs to the radical SAM superfamily. HydE family. Monomer. [4Fe-4S] cluster is required as a cofactor. Requires [2Fe-2S] cluster as cofactor.

In terms of biological role, required for the maturation of the [FeFe]-hydrogenase HydA. Catalyzes the reductive cleavage of S-adenosyl-L-methionine (in vitro), suggesting it may contribute to the biosynthesis of an essential sulfur-containing ligand that binds to the hydrogenase active site [2Fe-2S] cluster. This chain is [FeFe] hydrogenase maturase subunit HydE, found in Thermotoga maritima (strain ATCC 43589 / DSM 3109 / JCM 10099 / NBRC 100826 / MSB8).